A 410-amino-acid chain; its full sequence is Elongation factor Tu, chloroplastic (410 aa).

In terms of domain architecture, tr-type G spans 10–215 (KPHVNIGTIG…IVDEYIPTPQ (206 aa)). Positions 19–26 (GHVDHGKT) are G1. 19 to 26 (GHVDHGKT) provides a ligand contact to GTP. A Mg(2+)-binding site is contributed by Thr26. Residues 61–65 (GITIN) form a G2 region. The tract at residues 82-85 (DCPG) is G3. Residues 82-86 (DCPGH) and 137-140 (NKAD) each bind GTP. The segment at 137–140 (NKAD) is G4. The tract at residues 175–177 (SAL) is G5.

This sequence belongs to the TRAFAC class translation factor GTPase superfamily. Classic translation factor GTPase family. EF-Tu/EF-1A subfamily.

The protein localises to the plastid. It is found in the chloroplast. The catalysed reaction is GTP + H2O = GDP + phosphate + H(+). In terms of biological role, GTP hydrolase that promotes the GTP-dependent binding of aminoacyl-tRNA to the A-site of ribosomes during protein biosynthesis. In Cyanidioschyzon merolae (strain NIES-3377 / 10D) (Unicellular red alga), this protein is Elongation factor Tu, chloroplastic (tufA).